A 488-amino-acid chain; its full sequence is MTFNNKTIEELHNLLVSKEISATELTQATLENIKSREEALNSFVTIAEEQALVQAKAIDEAGIDANNVLSGIPLAVKDNISTDGILTTAASKMLYNYEPIFDATAVANAKTKGMIVVGKTNMDEFAMGGSGETSHYGATKNAWDHSKVPGGSSSGSAAAVASGQVRLSLGSDTGGSIRQPAAFNGIVGLKPTYGTVSRFGLIAFGSSLDQIGPFAPTVKENALLLNAIASEDTKDSTSAPVRIADFTSKIGQDIKGMKIALPKEYLGEGIDPEVKETILNAAKHFEKLGAIVEEVSLPHSKYGVAVYYIIASSEASSNLQRFDGIRYGYRAEDATNLDEIYVNSRSQGFGEEVKRRIMLGTFSLSSGYYDAYYKKAGQVRTLIIQDFEKVFADYDLILGPTAPSVAYDLDSLNHDPVAMYLADLLTIPVNLAGLPGISIPAGFSQGLPVGLQLIGPKYSEETIYQAAAAFEATTDYHKQQPVIFGGDN.

Active-site charge relay system residues include Lys-77 and Ser-152. The active-site Acyl-ester intermediate is Ser-176.

It belongs to the amidase family. GatA subfamily. In terms of assembly, heterotrimer of A, B and C subunits.

It catalyses the reaction L-glutamyl-tRNA(Gln) + L-glutamine + ATP + H2O = L-glutaminyl-tRNA(Gln) + L-glutamate + ADP + phosphate + H(+). Functionally, allows the formation of correctly charged Gln-tRNA(Gln) through the transamidation of misacylated Glu-tRNA(Gln) in organisms which lack glutaminyl-tRNA synthetase. The reaction takes place in the presence of glutamine and ATP through an activated gamma-phospho-Glu-tRNA(Gln). In Streptococcus pneumoniae (strain 70585), this protein is Glutamyl-tRNA(Gln) amidotransferase subunit A.